The sequence spans 255 residues: 1-(5-phosphoribosyl)-5-[(5-phosphoribosylamino)methylideneamino] imidazole-4-carboxamide isomerase (255 aa).

Asp-8 acts as the Proton acceptor in catalysis. Asp-129 serves as the catalytic Proton donor.

This sequence belongs to the HisA/HisF family.

The protein resides in the cytoplasm. The catalysed reaction is 1-(5-phospho-beta-D-ribosyl)-5-[(5-phospho-beta-D-ribosylamino)methylideneamino]imidazole-4-carboxamide = 5-[(5-phospho-1-deoxy-D-ribulos-1-ylimino)methylamino]-1-(5-phospho-beta-D-ribosyl)imidazole-4-carboxamide. Its pathway is amino-acid biosynthesis; L-histidine biosynthesis; L-histidine from 5-phospho-alpha-D-ribose 1-diphosphate: step 4/9. The protein is 1-(5-phosphoribosyl)-5-[(5-phosphoribosylamino)methylideneamino] imidazole-4-carboxamide isomerase of Prochlorococcus marinus (strain MIT 9211).